Reading from the N-terminus, the 458-residue chain is N-acetylgalactosamine kinase (458 aa).

Residues arginine 43, glutamate 49, histidine 50, and aspartate 52 each contribute to the alpha-D-galactose site. The ATP site is built by glycine 143, serine 145, and serine 146. Position 190 (aspartate 190) interacts with alpha-D-galactose. The active-site Proton acceptor is aspartate 190. Asparagine 233 and lysine 234 together coordinate ATP.

This sequence belongs to the GHMP kinase family. GalK subfamily. In terms of assembly, monomer.

The enzyme catalyses N-acetyl-alpha-D-galactosamine + ATP = N-acetyl-alpha-D-galactosamine 1-phosphate + ADP + H(+). Its function is as follows. Acts on GalNAc. Also acts as a galactokinase when galactose is present at high concentrations. May be involved in a salvage pathway for the reutilization of free GalNAc derived from the degradation of complex carbohydrates. The chain is N-acetylgalactosamine kinase (GALK2) from Homo sapiens (Human).